A 1085-amino-acid chain; its full sequence is Error-prone DNA polymerase 2 (1085 aa).

Positions 1040 to 1066 are disordered; it reads AGRGDEFAHGGGGPDSRDRQKPVVPRD.

It belongs to the DNA polymerase type-C family. DnaE2 subfamily.

It localises to the cytoplasm. It catalyses the reaction DNA(n) + a 2'-deoxyribonucleoside 5'-triphosphate = DNA(n+1) + diphosphate. Its function is as follows. DNA polymerase involved in damage-induced mutagenesis and translesion synthesis (TLS). It is not the major replicative DNA polymerase. The polypeptide is Error-prone DNA polymerase 2 (Agrobacterium fabrum (strain C58 / ATCC 33970) (Agrobacterium tumefaciens (strain C58))).